The primary structure comprises 476 residues: Siroheme synthase (476 aa).

A precorrin-2 dehydrogenase /sirohydrochlorin ferrochelatase region spans residues 1–207; sequence MTANVLFPLF…QRHAEAEAVL (207 aa). Residues 25–26 and 46–47 contribute to the NAD(+) site; these read KV and PS. Ser-132 carries the phosphoserine modification. The segment at 220–476 is uroporphyrinogen-III C-methyltransferase; the sequence is GSVTLVGAGA…SAPCPPALIL (257 aa). The Proton acceptor role is filled by Asp-252. Lys-274 acts as the Proton donor in catalysis. S-adenosyl-L-methionine is bound by residues 305 to 307, Val-310, 335 to 336, Met-387, and Gly-416; these read GGD and TA.

In the N-terminal section; belongs to the precorrin-2 dehydrogenase / sirohydrochlorin ferrochelatase family. This sequence in the C-terminal section; belongs to the precorrin methyltransferase family.

It carries out the reaction uroporphyrinogen III + 2 S-adenosyl-L-methionine = precorrin-2 + 2 S-adenosyl-L-homocysteine + H(+). The enzyme catalyses precorrin-2 + NAD(+) = sirohydrochlorin + NADH + 2 H(+). It catalyses the reaction siroheme + 2 H(+) = sirohydrochlorin + Fe(2+). The protein operates within cofactor biosynthesis; adenosylcobalamin biosynthesis; precorrin-2 from uroporphyrinogen III: step 1/1. Its pathway is cofactor biosynthesis; adenosylcobalamin biosynthesis; sirohydrochlorin from precorrin-2: step 1/1. It participates in porphyrin-containing compound metabolism; siroheme biosynthesis; precorrin-2 from uroporphyrinogen III: step 1/1. It functions in the pathway porphyrin-containing compound metabolism; siroheme biosynthesis; siroheme from sirohydrochlorin: step 1/1. The protein operates within porphyrin-containing compound metabolism; siroheme biosynthesis; sirohydrochlorin from precorrin-2: step 1/1. Multifunctional enzyme that catalyzes the SAM-dependent methylations of uroporphyrinogen III at position C-2 and C-7 to form precorrin-2 via precorrin-1. Then it catalyzes the NAD-dependent ring dehydrogenation of precorrin-2 to yield sirohydrochlorin. Finally, it catalyzes the ferrochelation of sirohydrochlorin to yield siroheme. The chain is Siroheme synthase from Xylella fastidiosa (strain 9a5c).